A 387-amino-acid chain; its full sequence is Succinyl-diaminopimelate desuccinylase (387 aa).

Residue histidine 74 participates in Zn(2+) binding. The active site involves aspartate 76. Aspartate 107 contributes to the Zn(2+) binding site. Residue glutamate 142 is the Proton acceptor of the active site. Glutamate 143, glutamate 171, and histidine 360 together coordinate Zn(2+).

This sequence belongs to the peptidase M20A family. DapE subfamily. Homodimer. Requires Zn(2+) as cofactor. Co(2+) serves as cofactor.

The enzyme catalyses N-succinyl-(2S,6S)-2,6-diaminopimelate + H2O = (2S,6S)-2,6-diaminopimelate + succinate. The protein operates within amino-acid biosynthesis; L-lysine biosynthesis via DAP pathway; LL-2,6-diaminopimelate from (S)-tetrahydrodipicolinate (succinylase route): step 3/3. In terms of biological role, catalyzes the hydrolysis of N-succinyl-L,L-diaminopimelic acid (SDAP), forming succinate and LL-2,6-diaminopimelate (DAP), an intermediate involved in the bacterial biosynthesis of lysine and meso-diaminopimelic acid, an essential component of bacterial cell walls. The polypeptide is Succinyl-diaminopimelate desuccinylase (Rhodopseudomonas palustris (strain ATCC BAA-98 / CGA009)).